A 536-amino-acid chain; its full sequence is Metal transporter Nramp2 (536 aa).

A disordered region spans residues 1 to 37; sequence MSSPSGGEDSKDDEKDEESNRLLPLSSSSQSQSLQSE. Residues 22 to 36 are compositionally biased toward low complexity; the sequence is LLPLSSSSQSQSLQS. N38 is a glycosylation site (N-linked (GlcNAc...) asparagine). 12 consecutive transmembrane segments (helical) span residues 76 to 96, 104 to 124, 161 to 181, 185 to 205, 213 to 233, 259 to 279, 305 to 325, 347 to 367, 400 to 420, 435 to 455, 465 to 485, and 492 to 512; these read LWLFTGPGFLMSIAFLDPGNL, AIAGYSLLWLLLWATVMGLLI, VALIGADIQEVIGSAIAIQIL, FLPLWAGVLITASDCFMFLFL, LEGVFAVLIATMALSFAWMCG, AVGVVGCVIMPHNVFLHSALV, VALFVSFMINLFVTTVFAKGF, YGGGLFPILYIWGIGLLAAGQ, SFAIIPTIIVAIIFNTSEASL, IPFALIPLLTLVAKEQVMGVF, AWTIAVLVILINGYLLIDFFI, and LFGFLIGSGTVAYVSFIIYLV.

Belongs to the NRAMP (TC 2.A.55) family.

The protein localises to the membrane. In terms of biological role, probable divalent metal transporter. The chain is Metal transporter Nramp2 from Populus trichocarpa (Western balsam poplar).